Reading from the N-terminus, the 541-residue chain is Zinc finger protein 329 (541 aa).

A Phosphoserine modification is found at Ser-50. 12 consecutive C2H2-type zinc fingers follow at residues 203–225 (YRCT…HRTH), 231–253 (YTCN…QRIH), 259–281 (YECS…QRIH), 287–309 (YECL…QRTH), 315–337 (YRCN…LRIH), 343–365 (YECS…ERTH), 371–393 (FECA…QKIH), 399–421 (YECK…QRIH), 427–449 (YGCN…QRTH), 455–477 (YECN…QRIH), 483–505 (YQCP…QRLH), and 511–533 (SRCP…QRAH).

The protein belongs to the krueppel C2H2-type zinc-finger protein family.

The protein localises to the nucleus. Functionally, may be involved in transcriptional regulation. In Homo sapiens (Human), this protein is Zinc finger protein 329 (ZNF329).